Here is a 780-residue protein sequence, read N- to C-terminus: ATP-dependent 6-phosphofructokinase, liver type (780 aa).

Ala-2 is subject to N-acetylalanine. The N-terminal catalytic PFK domain 1 stretch occupies residues 2 to 390 (AAVDLEKLRA…NWNIYKLLAH (389 aa)). Residues Gly-25, 88 to 89 (RC), and 118 to 121 (GDGS) each bind ATP. Residue Asp-119 participates in Mg(2+) binding. Substrate is bound by residues 164-166 (SID), Arg-201, 208-210 (MGR), Glu-264, Arg-292, and 298-301 (HVQR). Asp-166 (proton acceptor) is an active-site residue. Position 377 is a phosphoserine (Ser-377). The tract at residues 391 to 400 (QKPPKEKSNF) is interdomain linker. The segment at 401–780 (SLAILNVGAP…RRTLSMDKGF (380 aa)) is C-terminal regulatory PFK domain 2. Residues Arg-470, 527-531 (TISNN), Arg-565, 572-574 (MGG), and Glu-628 contribute to the beta-D-fructose 2,6-bisphosphate site. Residue Ser-529 is glycosylated (O-linked (GlcNAc) serine). Phosphotyrosine is present on Tyr-640. Beta-D-fructose 2,6-bisphosphate-binding positions include Arg-654, 660-663 (HLQQ), and Arg-734. Residue Ser-775 is modified to Phosphoserine.

This sequence belongs to the phosphofructokinase type A (PFKA) family. ATP-dependent PFK group I subfamily. Eukaryotic two domain clade 'E' sub-subfamily. As to quaternary structure, homo- and heterotetramers. Phosphofructokinase (PFK) enzyme functions as a tetramer composed of different combinations of 3 types of subunits, called PFKM (M), PFKL (L) and PFKP (P). The composition of the PFK tetramer differs according to the tissue type it is present in. The kinetic and regulatory properties of the tetrameric enzyme are dependent on the subunit composition, hence can vary across tissues. It depends on Mg(2+) as a cofactor. In terms of processing, glcNAcylation at Ser-529 by OGT decreases enzyme activity, leading to redirect glucose flux through the oxidative pentose phosphate pathway. Glycosylation is stimulated by both hypoxia and glucose deprivation.

It localises to the cytoplasm. The catalysed reaction is beta-D-fructose 6-phosphate + ATP = beta-D-fructose 1,6-bisphosphate + ADP + H(+). The protein operates within carbohydrate degradation; glycolysis; D-glyceraldehyde 3-phosphate and glycerone phosphate from D-glucose: step 3/4. Its activity is regulated as follows. Allosterically activated by ADP, AMP, or fructose 2,6-bisphosphate, and allosterically inhibited by ATP or citrate. GlcNAcylation by OGT overcomes allosteric regulation. Functionally, catalyzes the phosphorylation of D-fructose 6-phosphate to fructose 1,6-bisphosphate by ATP, the first committing step of glycolysis. Negatively regulates the phagocyte oxidative burst in response to bacterial infection by controlling cellular NADPH biosynthesis and NADPH oxidase-derived reactive oxygen species. Upon macrophage activation, drives the metabolic switch toward glycolysis, thus preventing glucose turnover that produces NADPH via pentose phosphate pathway. In Pongo abelii (Sumatran orangutan), this protein is ATP-dependent 6-phosphofructokinase, liver type (PFKL).